A 183-amino-acid polypeptide reads, in one-letter code: Ribulose bisphosphate carboxylase small subunit, chloroplastic (183 aa).

A chloroplast-targeting transit peptide spans 1-59 (MASSMISSGTVATVSADRPAPAQARMVAPFNGLKSSSAFPVTRKSNDITSIASNGGRVQ).

Belongs to the RuBisCO small chain family. Heterohexadecamer of 8 large and 8 small subunits.

It localises to the plastid. It is found in the chloroplast. Functionally, ruBisCO catalyzes two reactions: the carboxylation of D-ribulose 1,5-bisphosphate, the primary event in carbon dioxide fixation, as well as the oxidative fragmentation of the pentose substrate. Both reactions occur simultaneously and in competition at the same active site. Although the small subunit is not catalytic it is essential for maximal activity. The polypeptide is Ribulose bisphosphate carboxylase small subunit, chloroplastic (Pyrus pyrifolia (Chinese pear)).